The primary structure comprises 290 residues: Inositol monophosphatase 2 (290 aa).

Residues Glu83, Asp103, Ile105, and Asp106 each coordinate Mg(2+). Glu83 serves as a coordination point for substrate. Substrate-binding positions include 105-108 (IDGT), 207-209 (GSS), Gln226, and Asp233. Asp233 provides a ligand contact to Mg(2+).

It belongs to the inositol monophosphatase superfamily. In terms of assembly, homodimer. Requires Mg(2+) as cofactor. Mostly expressed in brain, small intestine, heart, kidney, and spleen (at protein level).

The protein resides in the cytoplasm. It carries out the reaction a myo-inositol phosphate + H2O = myo-inositol + phosphate. The enzyme catalyses 1D-myo-inositol 1-phosphate + H2O = myo-inositol + phosphate. The catalysed reaction is 1D-myo-inositol 2-phosphate + H2O = myo-inositol + phosphate. It catalyses the reaction 1D-myo-inositol 3-phosphate + H2O = myo-inositol + phosphate. It carries out the reaction 1D-myo-inositol 4-phosphate + H2O = myo-inositol + phosphate. The enzyme catalyses 1D-myo-inositol 5-phosphate + H2O = myo-inositol + phosphate. The catalysed reaction is 1D-myo-inositol 6-phosphate + H2O = myo-inositol + phosphate. It catalyses the reaction alpha-D-glucose 1-phosphate + H2O = D-glucose + phosphate. It carries out the reaction glycerol 2-phosphate + H2O = glycerol + phosphate. The enzyme catalyses adenosine 2'-phosphate + H2O = adenosine + phosphate. It participates in polyol metabolism; myo-inositol biosynthesis; myo-inositol from D-glucose 6-phosphate: step 2/2. In terms of biological role, phosphatase that can use myo-inositol monophosphates, myo-inositol 1,4-diphosphate, scyllo-inositol-1,4-diphosphate, glucose-1-phosphate, beta-glycerophosphate and 2'-AMP as substrates in vitro. No physiological substrates has been described yet. Has been implicated as the pharmacological target for lithium Li(+) action in brain. This chain is Inositol monophosphatase 2, found in Mus musculus (Mouse).